The sequence spans 342 residues: Endo-1,4-beta-xylanase A (342 aa).

One can recognise a GH10 domain in the interval 11-342 (EMLNLSLAKT…KEALYRILRF (332 aa)). Glutamate 144 serves as the catalytic Proton donor. The active-site Nucleophile is the glutamate 252.

This sequence belongs to the glycosyl hydrolase 10 (cellulase F) family. Cytoplasmic xylanase subfamily.

The protein resides in the cytoplasm. The enzyme catalyses Endohydrolysis of (1-&gt;4)-beta-D-xylosidic linkages in xylans.. It functions in the pathway glycan degradation; xylan degradation. The protein is Endo-1,4-beta-xylanase A (xynA) of Caldicellulosiruptor saccharolyticus (Caldocellum saccharolyticum).